Here is a 358-residue protein sequence, read N- to C-terminus: PDZ and LIM domain protein 3 (358 aa).

The PDZ domain occupies 1 to 84 (MPQNVLLPGP…QLCLKIDRAE (84 aa)). Disordered regions lie at residues 126–155 (FILP…SVST) and 237–274 (DTEH…RAPV). The span at 129 to 146 (PGRSSGSSTPSGFDPGSG) shows a compositional bias: low complexity. The LIM zinc-binding domain maps to 288 to 347 (PICDRCGNGIVGTVVKAKDKLRHPDCFVCSDCNLNLKQKGYFFVEGQLYCEAHARARMRP).

It localises to the cytoplasm. The protein localises to the myofibril. Its subcellular location is the sarcomere. The protein resides in the z line. Functionally, may play a role in the organization of actin filament arrays within muscle cells. The chain is PDZ and LIM domain protein 3 (pdlim3) from Xenopus laevis (African clawed frog).